The sequence spans 312 residues: Olfactory receptor 2B8 (312 aa).

The Extracellular segment spans residues 1–25 (MDQKNGSSFTGFILLGFSDRPQLEL). N-linked (GlcNAc...) asparagine glycosylation is present at asparagine 5. Residues 26–49 (VLFVVLLIFYIFTLLGNKTIIVLS) form a helical membrane-spanning segment. At 50 to 57 (HLDPHLHT) the chain is on the cytoplasmic side. Residues 58-79 (PMYFFFSNLSFLDLCYTTGIVP) traverse the membrane as a helical segment. The Extracellular portion of the chain corresponds to 80–100 (QLLVNLRGADKSISYGGCVVQ). Cysteine 97 and cysteine 189 are disulfide-bonded. The chain crosses the membrane as a helical span at residues 101–120 (LYISLGLGSTECVLLGVMVF). Topologically, residues 121–139 (DRYAAVCRPLHYTVVMHPC) are cytoplasmic. A helical transmembrane segment spans residues 140-158 (LYVLMASTSWVIGFANSLL). Residues 159–195 (QTVLILLLTLCGRNKLEHFLCEVPPLLKLACVDTTMN) lie on the Extracellular side of the membrane. Asparagine 195 is a glycosylation site (N-linked (GlcNAc...) asparagine). The chain crosses the membrane as a helical span at residues 196–219 (ESELFFVSVIILLVPVALIIFSYS). Over 220-236 (QIVRAVMRIKLATGQRK) the chain is Cytoplasmic. Residues 237 to 259 (VFGTCGSHLTVVSLFYGTAIYAY) form a helical membrane-spanning segment. At 260–272 (LQPGNNYSQDQGK) the chain is on the extracellular side. Residue asparagine 265 is glycosylated (N-linked (GlcNAc...) asparagine). A helical transmembrane segment spans residues 273 to 292 (FISLFYTIITPMINPLIYTL). At 293–312 (RNKDVKGALKKVLWKNYDSR) the chain is on the cytoplasmic side.

This sequence belongs to the G-protein coupled receptor 1 family.

The protein resides in the cell membrane. In terms of biological role, odorant receptor. The chain is Olfactory receptor 2B8 from Homo sapiens (Human).